Consider the following 207-residue polypeptide: MARYRGPVVKIMRREGVDLFLKSSYTFNKDKFHRKGPPGMPTKRKGKVSEYGAQLREKQKLKRAYGLLEKQFRRYYEEASHAHGVTGEILLQLLERRLDNVVYRLGFAITRRQARNFIAHRHILVNGERVDIPSYRLNVGDKVEIREKFKTSSFIADNIKLSQSLQGIPSWLSADYTNFGGDVTALPERHHIDLPVKEQVIVELYSK.

One can recognise an S4 RNA-binding domain in the interval 96–156 (RRLDNVVYRL…EKFKTSSFIA (61 aa)).

The protein belongs to the universal ribosomal protein uS4 family. In terms of assembly, part of the 30S ribosomal subunit. Contacts protein S5. The interaction surface between S4 and S5 is involved in control of translational fidelity.

One of the primary rRNA binding proteins, it binds directly to 16S rRNA where it nucleates assembly of the body of the 30S subunit. Functionally, with S5 and S12 plays an important role in translational accuracy. The protein is Small ribosomal subunit protein uS4 of Leptospira interrogans serogroup Icterohaemorrhagiae serovar copenhageni (strain Fiocruz L1-130).